We begin with the raw amino-acid sequence, 252 residues long: MAAKDRIQAIKQMVANDKKVTVSNLSGIFQVTEETIRRDLEKLEDEGFLTRTYGGAVLNTAMLTENIHFYKRASSFYEEKQLIARKALPFIDNKTTMAADSSSTVMELLKLLQDRSGLTLLTNSAEAIHVLAQSEIKVVSTGGELNKNTLSLQGRITKEIIRRYHVDIMVMSCKGLDINSGALDSNEAEAEIKKTMIRQATEVALLVDHSKFDRKAFVQLADFSHINYIITDKSPGAEWIAFCKDNNIQLVW.

Positions 3-58 constitute an HTH deoR-type domain; the sequence is AKDRIQAIKQMVANDKKVTVSNLSGIFQVTEETIRRDLEKLEDEGFLTRTYGGAVL. A DNA-binding region (H-T-H motif) is located at residues 20-39; that stretch reads VTVSNLSGIFQVTEETIRRD.

This is an uncharacterized protein from Escherichia coli (strain K12).